We begin with the raw amino-acid sequence, 477 residues long: Asparaginyl-tRNA synthetase (477 aa).

Residues 1-14 (MLGVRCLLRSVRFC) constitute a mitochondrion transit peptide. Position 353 is an N6-acetyllysine (Lys-353).

It belongs to the class-II aminoacyl-tRNA synthetase family. In terms of assembly, homodimer.

The protein resides in the mitochondrion matrix. Its subcellular location is the mitochondrion. The enzyme catalyses tRNA(Asn) + L-asparagine + ATP = L-asparaginyl-tRNA(Asn) + AMP + diphosphate + H(+). Its function is as follows. Mitochondrial aminoacyl-tRNA synthetase that catalyzes the specific attachment of the asparagine amino acid (aa) to the homologous transfer RNA (tRNA), further participating in protein synthesis. The reaction occurs in a two steps: asparagine is first activated by ATP to form Asn-AMP and then transferred to the acceptor end of tRNA(Asn). The chain is Asparaginyl-tRNA synthetase from Homo sapiens (Human).